Consider the following 238-residue polypeptide: NADH-quinone oxidoreductase subunit I (238 aa).

4Fe-4S ferredoxin-type domains lie at 81–111 and 123–152; these read LVPREDGRARCVACYMCATACPAQCIYIEAG and VKFVIDELRCIVCGFCVEACPKDAIRMDSG. Residues C91, C94, C97, C101, C132, C135, C138, and C142 each coordinate [4Fe-4S] cluster.

Belongs to the complex I 23 kDa subunit family. NDH-1 is composed of 14 different subunits. Subunits NuoA, H, J, K, L, M, N constitute the membrane sector of the complex. [4Fe-4S] cluster is required as a cofactor.

It localises to the cell inner membrane. The catalysed reaction is a quinone + NADH + 5 H(+)(in) = a quinol + NAD(+) + 4 H(+)(out). Its function is as follows. NDH-1 shuttles electrons from NADH, via FMN and iron-sulfur (Fe-S) centers, to quinones in the respiratory chain. The immediate electron acceptor for the enzyme in this species is believed to be ubiquinone. Couples the redox reaction to proton translocation (for every two electrons transferred, four hydrogen ions are translocated across the cytoplasmic membrane), and thus conserves the redox energy in a proton gradient. This is NADH-quinone oxidoreductase subunit I from Anaeromyxobacter sp. (strain Fw109-5).